A 172-amino-acid polypeptide reads, in one-letter code: Alpha-crystallin A chain (172 aa).

Methionine 1 bears the N-acetylmethionine mark. Residues 1 to 63 (MDVTIQHPWF…RTVLDSGISE (63 aa)) form a required for complex formation with BFSP1 and BFSP2 region. The residue at position 6 (glutamine 6) is a Deamidated glutamine; partial. Serine 45 is modified (phosphoserine). Glutamine 50 bears the Deamidated glutamine; partial mark. A sHSP domain is found at 52 to 163 (LFRTVLDSGI…HERAIPVARE (112 aa)). Residue lysine 70 is modified to N6-acetyllysine. Glutamine 90 is subject to Deamidated glutamine; partial. Lysine 99 is modified (N6-acetyllysine). Residue histidine 100 participates in Zn(2+) binding. Residue asparagine 101 is modified to Deamidated asparagine; partial. Zn(2+)-binding residues include glutamate 102 and histidine 107. Position 122 is a phosphoserine (serine 122). Asparagine 123 carries the post-translational modification Deamidated asparagine; partial. The residue at position 147 (glutamine 147) is a Deamidated glutamine; partial. Histidine 154 is a binding site for Zn(2+). Serine 168 carries O-linked (GlcNAc) serine glycosylation.

It belongs to the small heat shock protein (HSP20) family. As to quaternary structure, heteromer composed of three CRYAA and one CRYAB subunits. Inter-subunit bridging via zinc ions enhances stability, which is crucial as there is no protein turn over in the lens. Can also form homodimers and homotetramers (dimers of dimers) which serve as the building blocks of homooligomers. Within homooligomers, the zinc-binding motif is created from residues of 3 different molecules. His-100 and Glu-102 from one molecule are ligands of the zinc ion, and His-107 and His-154 residues from additional molecules complete the site with tetrahedral coordination geometry. Part of a complex required for lens intermediate filament formation composed of BFSP1, BFSP2 and CRYAA. Post-translationally, acetylation at Lys-70 may increase chaperone activity. In terms of processing, undergoes age-dependent proteolytical cleavage at the C-terminus.

It is found in the cytoplasm. The protein resides in the nucleus. Its function is as follows. Contributes to the transparency and refractive index of the lens. Acts as a chaperone, preventing aggregation of various proteins under a wide range of stress conditions. Required for the correct formation of lens intermediate filaments as part of a complex composed of BFSP1, BFSP2 and CRYAA. The protein is Alpha-crystallin A chain (CRYAA) of Macaca mulatta (Rhesus macaque).